A 117-amino-acid chain; its full sequence is Protein MGF 110-13L (117 aa).

Positions 1–16 are cleaved as a signal peptide; it reads MKLFVLLSILVWLAQP.

Belongs to the asfivirus MGF 110 family.

This chain is Protein MGF 110-13L, found in Ornithodoros (relapsing fever ticks).